A 205-amino-acid chain; its full sequence is Large ribosomal subunit protein uL4 (205 aa).

The segment at 53-77 (RAAVRGGGRKPWKQKGTGRARAGSI) is disordered. The span at 59–70 (GGRKPWKQKGTG) shows a compositional bias: basic residues.

It belongs to the universal ribosomal protein uL4 family. In terms of assembly, part of the 50S ribosomal subunit.

Functionally, one of the primary rRNA binding proteins, this protein initially binds near the 5'-end of the 23S rRNA. It is important during the early stages of 50S assembly. It makes multiple contacts with different domains of the 23S rRNA in the assembled 50S subunit and ribosome. In terms of biological role, forms part of the polypeptide exit tunnel. In Acidithiobacillus ferrooxidans (strain ATCC 23270 / DSM 14882 / CIP 104768 / NCIMB 8455) (Ferrobacillus ferrooxidans (strain ATCC 23270)), this protein is Large ribosomal subunit protein uL4.